Reading from the N-terminus, the 176-residue chain is Cell division protein ZapC (176 aa).

This sequence belongs to the ZapC family. As to quaternary structure, interacts directly with FtsZ.

It localises to the cytoplasm. In terms of biological role, contributes to the efficiency of the cell division process by stabilizing the polymeric form of the cell division protein FtsZ. Acts by promoting interactions between FtsZ protofilaments and suppressing the GTPase activity of FtsZ. This Pseudoalteromonas translucida (strain TAC 125) protein is Cell division protein ZapC.